The chain runs to 291 residues: ATP synthase gamma chain (291 aa).

It belongs to the ATPase gamma chain family. F-type ATPases have 2 components, CF(1) - the catalytic core - and CF(0) - the membrane proton channel. CF(1) has five subunits: alpha(3), beta(3), gamma(1), delta(1), epsilon(1). CF(0) has three main subunits: a, b and c.

It localises to the cell membrane. Its function is as follows. Produces ATP from ADP in the presence of a proton gradient across the membrane. The gamma chain is believed to be important in regulating ATPase activity and the flow of protons through the CF(0) complex. The protein is ATP synthase gamma chain of Streptococcus equinus (Streptococcus bovis).